The primary structure comprises 331 residues: Glycerol-3-phosphate dehydrogenase [NAD(P)+] (331 aa).

Residues Ser10, Trp11, and Lys101 each contribute to the NADPH site. The sn-glycerol 3-phosphate site is built by Lys101, Gly132, and Ser134. Ala136 serves as a coordination point for NADPH. Sn-glycerol 3-phosphate is bound by residues Lys188, Asp241, Ser251, Arg252, and Asn253. Lys188 serves as the catalytic Proton acceptor. Residue Arg252 coordinates NADPH. NADPH is bound by residues Val276 and Glu278.

This sequence belongs to the NAD-dependent glycerol-3-phosphate dehydrogenase family.

It is found in the cytoplasm. The catalysed reaction is sn-glycerol 3-phosphate + NAD(+) = dihydroxyacetone phosphate + NADH + H(+). The enzyme catalyses sn-glycerol 3-phosphate + NADP(+) = dihydroxyacetone phosphate + NADPH + H(+). It functions in the pathway membrane lipid metabolism; glycerophospholipid metabolism. Catalyzes the reduction of the glycolytic intermediate dihydroxyacetone phosphate (DHAP) to sn-glycerol 3-phosphate (G3P), the key precursor for phospholipid synthesis. This Acholeplasma laidlawii (strain PG-8A) protein is Glycerol-3-phosphate dehydrogenase [NAD(P)+].